A 198-amino-acid polypeptide reads, in one-letter code: UPF0548 protein DR_2035 (198 aa).

It belongs to the UPF0548 family.

The sequence is that of UPF0548 protein DR_2035 from Deinococcus radiodurans (strain ATCC 13939 / DSM 20539 / JCM 16871 / CCUG 27074 / LMG 4051 / NBRC 15346 / NCIMB 9279 / VKM B-1422 / R1).